The primary structure comprises 307 residues: Recombination-associated protein RdgC (307 aa).

It belongs to the RdgC family.

Its subcellular location is the cytoplasm. The protein resides in the nucleoid. In terms of biological role, may be involved in recombination. The sequence is that of Recombination-associated protein RdgC from Burkholderia cenocepacia (strain ATCC BAA-245 / DSM 16553 / LMG 16656 / NCTC 13227 / J2315 / CF5610) (Burkholderia cepacia (strain J2315)).